Consider the following 146-residue polypeptide: Acidic phospholipase A2 S8-51 (146 aa).

An N-terminal signal peptide occupies residues 1-19 (MYPAHLLVLLAVCVSLLGA). Positions 20–27 (ASIPPQPL) are excised as a propeptide. Cystine bridges form between Cys-38–Cys-98, Cys-54–Cys-145, Cys-56–Cys-72, Cys-71–Cys-126, Cys-78–Cys-119, Cys-87–Cys-112, and Cys-105–Cys-117. Tyr-55, Gly-57, and Gly-59 together coordinate Ca(2+). His-75 is a catalytic residue. Asp-76 contacts Ca(2+). The active site involves Asp-120.

The protein belongs to the phospholipase A2 family. Group I subfamily. D49 sub-subfamily. Ca(2+) serves as cofactor. In terms of tissue distribution, expressed by the venom gland.

The protein localises to the secreted. The catalysed reaction is a 1,2-diacyl-sn-glycero-3-phosphocholine + H2O = a 1-acyl-sn-glycero-3-phosphocholine + a fatty acid + H(+). Snake venom phospholipase A2 (PLA2) that inhibits collagen-induced platelet aggregation. PLA2 catalyzes the calcium-dependent hydrolysis of the 2-acyl groups in 3-sn-phosphoglycerides. The sequence is that of Acidic phospholipase A2 S8-51 from Austrelaps superbus (Lowland copperhead snake).